We begin with the raw amino-acid sequence, 113 residues long: MTTPAVKTGLFVGLNKGHVVTRRELAPRPNSRKGKTSKRTIFIRKLIREVAGMAPYEKRITELLKVGKDKRALKVAKRKLGTHKRAKRKREEMSSVLRKMRSLGGAAAAEKKM.

The segment covering 78–88 has biased composition (basic residues); that stretch reads RKLGTHKRAKR. Residues 78–113 form a disordered region; sequence RKLGTHKRAKRKREEMSSVLRKMRSLGGAAAAEKKM.

Belongs to the eukaryotic ribosomal protein eL36 family.

In Arabidopsis thaliana (Mouse-ear cress), this protein is Large ribosomal subunit protein eL36z (RPL36A).